We begin with the raw amino-acid sequence, 288 residues long: Bifunctional protein FolD (288 aa).

Residues 166–168 and I232 each bind NADP(+); that span reads GAS.

Belongs to the tetrahydrofolate dehydrogenase/cyclohydrolase family. As to quaternary structure, homodimer.

It carries out the reaction (6R)-5,10-methylene-5,6,7,8-tetrahydrofolate + NADP(+) = (6R)-5,10-methenyltetrahydrofolate + NADPH. It catalyses the reaction (6R)-5,10-methenyltetrahydrofolate + H2O = (6R)-10-formyltetrahydrofolate + H(+). It participates in one-carbon metabolism; tetrahydrofolate interconversion. Functionally, catalyzes the oxidation of 5,10-methylenetetrahydrofolate to 5,10-methenyltetrahydrofolate and then the hydrolysis of 5,10-methenyltetrahydrofolate to 10-formyltetrahydrofolate. The chain is Bifunctional protein FolD from Salmonella heidelberg (strain SL476).